A 131-amino-acid chain; its full sequence is D-ribose pyranase (131 aa).

The Proton donor role is filled by His-20. Residues Asp-28, His-98, and 120–122 (YAN) contribute to the substrate site.

This sequence belongs to the RbsD / FucU family. RbsD subfamily. As to quaternary structure, homodecamer.

The protein localises to the cytoplasm. The catalysed reaction is beta-D-ribopyranose = beta-D-ribofuranose. Its pathway is carbohydrate metabolism; D-ribose degradation; D-ribose 5-phosphate from beta-D-ribopyranose: step 1/2. Its function is as follows. Catalyzes the interconversion of beta-pyran and beta-furan forms of D-ribose. In Bacillus cereus (strain ATCC 14579 / DSM 31 / CCUG 7414 / JCM 2152 / NBRC 15305 / NCIMB 9373 / NCTC 2599 / NRRL B-3711), this protein is D-ribose pyranase.